The sequence spans 610 residues: Elongation factor 4 (610 aa).

The 183-residue stretch at Ser-13–Lys-195 folds into the tr-type G domain. Residues Asp-25–Thr-30 and Asn-142–Asp-145 each bind GTP.

Belongs to the TRAFAC class translation factor GTPase superfamily. Classic translation factor GTPase family. LepA subfamily.

The protein localises to the cell inner membrane. It carries out the reaction GTP + H2O = GDP + phosphate + H(+). Functionally, required for accurate and efficient protein synthesis under certain stress conditions. May act as a fidelity factor of the translation reaction, by catalyzing a one-codon backward translocation of tRNAs on improperly translocated ribosomes. Back-translocation proceeds from a post-translocation (POST) complex to a pre-translocation (PRE) complex, thus giving elongation factor G a second chance to translocate the tRNAs correctly. Binds to ribosomes in a GTP-dependent manner. The protein is Elongation factor 4 of Rhizobium etli (strain CIAT 652).